Reading from the N-terminus, the 1191-residue chain is Protogenin (1191 aa).

A signal peptide spans 1-23 (MAPPVRPGMLPLLLLLLLPPLGS). Ig-like domains follow at residues 24–124 (VPGV…AHLT), 126–216 (STIS…ASLT), 229–316 (PTII…ATLT), and 321–405 (PSFV…ARLT). Residues 24–943 (VPGVWSFSEL…YYHLDQKSMT (920 aa)) are Extracellular-facing. Disulfide bonds link Cys-54–Cys-107 and Cys-150–Cys-199. Asn-237 is a glycosylation site (N-linked (GlcNAc...) asparagine). 2 cysteine pairs are disulfide-bonded: Cys-250–Cys-298 and Cys-342–Cys-389. 5 Fibronectin type-III domains span residues 415–509 (APYN…TLED), 511–607 (PLRP…TPKA), 612–711 (APKS…VRDR), 718–811 (PPHH…TLPE), and 816–911 (PPVG…VLPK). A glycan (N-linked (GlcNAc...) asparagine) is linked at Asn-624. A helical membrane pass occupies residues 944–964 (GIAVGVGIALTCILICVLILI). Over 965–1191 (YRSKARKSSA…LRYAAEGFPV (227 aa)) the chain is Cytoplasmic. Disordered regions lie at residues 975-1010 (SKTA…ETAE) and 1079-1191 (ISDE…GFPV). Over residues 977-990 (TAQSGTQPLSQASA) the composition is skewed to polar residues. Residues 1104-1132 (DTEHSANSEGSHETGDSGRFSHESNDEIH) show a composition bias toward basic and acidic residues. Composition is skewed to polar residues over residues 1135–1146 (SVISSTPPTSNP) and 1171–1180 (EQTSAPQTSA).

This sequence belongs to the immunoglobulin superfamily. DCC family. As to expression, from mid-gastrulation to early somite stages, restricted to posterior neural plate and mesoderm with an anterior limit at the level of the rhombencephalon. Posterior restriction is progressively lost during somitogenesis. Expression is maintained in the neural tube and paraxial mesoderm during this process. As development proceeds, further restricted to the dorsal parts of the spinal cord and somites. In parallel, expression progresses caudally during axis elongation.

It localises to the membrane. In terms of biological role, may play a role in anteroposterior axis elongation. The protein is Protogenin of Mus musculus (Mouse).